Reading from the N-terminus, the 377-residue chain is MQNQIISLSRSLIQRKSISPNDEGCQQLIAERLQAVRFKLEWLPFGDTLNLWATHGEGEPCLAFAGHTDVVPEGDESQWTYPPFSAEIVDDMLYGRGAADMKGSLAAMVIACETFVKNNPNHQGKIALLITSDEEAAAKDGTVKVVETLMQRQEPIHYCVVGEPSSTKQLGDVVKNGRRGSITANLYIEGIQGHVAYPHLAENPVHTALPFLSELTAYQWDNGNEFFPPTSLQIANIKAGTGSNNVIPGELYVQFNLRYCTEVNDEIIKTKVAEMLRKYGLKHRIEWNLSGKPFLADNGKLVQATIQAVENVTQITPKLDTGGGTSDGRFIALMGAEVVEFGPINQTIHKVNECVNVNDLGKCGEVYYQILCSVIPN.

Residue H67 coordinates Zn(2+). Residue D69 is part of the active site. D100 provides a ligand contact to Zn(2+). Residue E134 is the Proton acceptor of the active site. E135, E163, and H349 together coordinate Zn(2+).

This sequence belongs to the peptidase M20A family. DapE subfamily. In terms of assembly, homodimer. Requires Zn(2+) as cofactor. It depends on Co(2+) as a cofactor.

It catalyses the reaction N-succinyl-(2S,6S)-2,6-diaminopimelate + H2O = (2S,6S)-2,6-diaminopimelate + succinate. It functions in the pathway amino-acid biosynthesis; L-lysine biosynthesis via DAP pathway; LL-2,6-diaminopimelate from (S)-tetrahydrodipicolinate (succinylase route): step 3/3. Its function is as follows. Catalyzes the hydrolysis of N-succinyl-L,L-diaminopimelic acid (SDAP), forming succinate and LL-2,6-diaminopimelate (DAP), an intermediate involved in the bacterial biosynthesis of lysine and meso-diaminopimelic acid, an essential component of bacterial cell walls. The sequence is that of Succinyl-diaminopimelate desuccinylase from Glaesserella parasuis serovar 5 (strain SH0165) (Haemophilus parasuis).